Reading from the N-terminus, the 2646-residue chain is Probable helicase senataxin (2646 aa).

Residue Ser102 is modified to Phosphoserine. Residue Lys339 forms a Glycyl lysine isopeptide (Lys-Gly) (interchain with G-Cter in SUMO1) linkage. Ser640 carries the post-translational modification Phosphoserine. Disordered stretches follow at residues 705 to 734 (KISAEKSGKESSSYAPSNSTSRNGPEWGCD) and 825 to 876 (GGAL…DDED). A compositionally biased stretch (polar residues) spans 714 to 727 (ESSSYAPSNSTSRN). Residues 867–876 (LDNSSSDDED) are compositionally biased toward acidic residues. Phosphoserine is present on residues Ser870, Ser871, Ser872, Ser938, Ser1002, and Ser1004. Positions 1001–1023 (ISDSDEEEDEDEDERSSSEENIK) are disordered. A compositionally biased stretch (acidic residues) spans 1003-1014 (DSDEEEDEDEDE). Lys1051 is covalently cross-linked (Glycyl lysine isopeptide (Lys-Gly) (interchain with G-Cter in SUMO2)). A compositionally biased stretch (basic and acidic residues) spans 1122–1133 (RNKAEGVKEHAG). The segment at 1122-1245 (RNKAEGVKEH…DTRRGQSKSS (124 aa)) is disordered. Positions 1147 to 1156 (GVKKPKRKRY) are enriched in basic residues. The span at 1176-1189 (LPDRRDLTESDLKS) shows a compositional bias: basic and acidic residues. Residues 1196–1211 (TPSSSVERDSTILQKS) are compositionally biased toward polar residues. The segment covering 1212–1222 (TKSRTHSKPVR) has biased composition (basic residues). Ser1318 is modified (phosphoserine). Residues Lys1328, Lys1329, and Lys1398 each participate in a glycyl lysine isopeptide (Lys-Gly) (interchain with G-Cter in SUMO2) cross-link. A Phosphoserine modification is found at Ser1472. Thr1474 carries the phosphothreonine modification. The tract at residues 1591 to 1627 (LSKSLESTTLQQSALKNKSSGAQPNLKVTPPSSMGSQ) is disordered. Residues 1595-1613 (LESTTLQQSALKNKSSGAQ) show a composition bias toward polar residues. Position 1939–1946 (1939–1946 (GPPGTGKS)) interacts with ATP. Residues 2046-2063 (KKDLPSHIQEMLRRKEIL) carry the Bipartite nuclear localization signal motif. Thr2450 carries the post-translational modification Phosphothreonine. Disordered stretches follow at residues 2450–2472 (THPPATAPEAPRPQGGLPSNRLD), 2486–2506 (HTPSDTVTSKGPERPLLQDRL), and 2569–2624 (SHRS…THHV). Composition is skewed to basic and acidic residues over residues 2496–2506 (GPERPLLQDRL) and 2593–2608 (KYSDPDAGLSHKREPR). The necessary for nuclear localization stretch occupies residues 2632-2646 (RRRLDDSSAKRRQFL).

The protein belongs to the DNA2/NAM7 helicase family. As to quaternary structure, homodimer. Interacts with PER2; the interaction inhibits termination of circadian target genes. Interacts with CHD4, POLR2A, PRKDC and TRIM28. Interacts with UBE2I. Interacts (via N-terminus domain) with EXOSC9 (via C-terminus region); the interaction enhances SETX sumoylation. Interacts with NCL (via N-terminus domain). Interacts with PABPN1, PABPC1 and SF3B1. Interacts with SMN1/SMN2 and POLR2A; SMN1/SMN2 recruits SETX to POLR2A. Ubiquitinated. Post-translationally, sumoylated preferentially with SUMO2 or SUMO3. Expressed in cerebellum, hippocampus, olfactory bulb, Bergmann glial fibers, stellate cells and Purkinje cells. Expressed in the epithelial cells of the lens but not in mature lens fiber cells. Expressed in the retina (highly expressed in inner and outer segments of photoreceptors and outer plexiform layer cells but weakly expressed in the inner plexiform and ganglion cell layers). Expressed in the kidney.

It localises to the nucleus. The protein resides in the nucleoplasm. It is found in the nucleolus. Its subcellular location is the cytoplasm. The protein localises to the chromosome. It localises to the telomere. The protein resides in the cell projection. It is found in the axon. Its subcellular location is the growth cone. Probable RNA/DNA helicase involved in diverse aspects of RNA metabolism and genomic integrity. Plays a role in transcription regulation by its ability to modulate RNA Polymerase II (Pol II) binding to chromatin and through its interaction with proteins involved in transcription. Contributes to the mRNA splicing efficiency and splice site selection. Required for the resolution of R-loop RNA-DNA hybrid formation at G-rich pause sites located downstream of the poly(A) site, allowing XRN2 recruitment and XRN2-mediated degradation of the downstream cleaved RNA and hence efficient RNA polymerase II (RNAp II) transcription termination. Required for the 3' transcriptional termination of PER1 and CRY2, thus playing an important role in the circadian rhythm regulation. Involved in DNA double-strand breaks damage response generated by oxidative stress. In association with RRP45, targets the RNA exosome complex to sites of transcription-induced DNA damage. Plays a role in the development and maturation of germ cells: essential for male meiosis, acting at the interface of transcription and meiotic recombination, and in the process of gene silencing during meiotic sex chromosome inactivation (MSCI). Plays a role in neurite outgrowth in hippocampal cells through FGF8-activated signaling pathways. Inhibits retinoic acid-induced apoptosis. May be involved in telomeric stability through the regulation of telomere repeat-containing RNA (TERRA) transcription. This is Probable helicase senataxin from Mus musculus (Mouse).